Consider the following 581-residue polypeptide: DNA polymerase alpha subunit B (581 aa).

This sequence belongs to the DNA polymerase alpha subunit B family. DNA polymerase alpha:primase is a four subunit enzyme complex, which is assembled throughout the cell cycle, and consists of the two DNA polymerase subunits A and B, and the DNA primase large and small subunits. Subunit B binds to subunit A.

The protein resides in the nucleus. Functionally, may play an essential role at the early stage of chromosomal DNA replication by coupling the polymerase alpha/primase complex to the cellular replication machinery. Required for the distribution of pie-1 in cell divsion. The polypeptide is DNA polymerase alpha subunit B (div-1) (Caenorhabditis elegans).